Consider the following 218-residue polypeptide: Small ribosomal subunit protein uS3 (218 aa).

Position 1 is an N-acetylmethionine (M1). Residues 23–95 (LNELFTREFN…TVVLFAEKIL (73 aa)) enclose the KH type-2 domain.

Belongs to the universal ribosomal protein uS3 family.

This is Small ribosomal subunit protein uS3 (rps3) from Dictyostelium discoideum (Social amoeba).